The chain runs to 207 residues: MSRYTGSIYRKARRLNFSILESGKEFTNNKSKKGVKVPGQHGSLIRPKLSNYGEQLQEKQKMQFMYGLNDRQFRRLFAVSKKMSGILTMNLFRTLESRLDNLVFRMGFAPTRRGARQLVSHGHVLVNGKTFDIPSALISLGSVVELKPRAHNLPLVKLALESKAVAPFVEVNKKTLSGTYVRYPERNELPADVNETYVVEYYKRLVK.

The S4 RNA-binding domain maps to 97–165 (SRLDNLVFRM…VKLALESKAV (69 aa)).

It belongs to the universal ribosomal protein uS4 family. As to quaternary structure, part of the 30S ribosomal subunit. Contacts protein S5. The interaction surface between S4 and S5 is involved in control of translational fidelity.

Its function is as follows. One of the primary rRNA binding proteins, it binds directly to 16S rRNA where it nucleates assembly of the body of the 30S subunit. With S5 and S12 plays an important role in translational accuracy. This chain is Small ribosomal subunit protein uS4, found in Mycoplasmoides gallisepticum (strain R(low / passage 15 / clone 2)) (Mycoplasma gallisepticum).